The chain runs to 150 residues: Ribosome maturation factor RimP (150 aa).

The protein belongs to the RimP family.

It localises to the cytoplasm. In terms of biological role, required for maturation of 30S ribosomal subunits. The chain is Ribosome maturation factor RimP from Hahella chejuensis (strain KCTC 2396).